A 1165-amino-acid polypeptide reads, in one-letter code: Chitin synthase 3 (1165 aa).

Residues 1–170 (MTGLNGDDPD…ETNDTLSFWQ (170 aa)) are Cytoplasmic-facing. Disordered regions lie at residues 19–53 (DEES…NNPD) and 74–97 (PSST…GSVR). Residues 74-92 (PSSTGVNPNATRRSGSLRS) show a composition bias toward polar residues. A Glycyl lysine isopeptide (Lys-Gly) (interchain with G-Cter in ubiquitin) cross-link involves residue Lys136. Residues 171–191 (MYCYFITFWAPAPILAFCGMP) form a helical membrane-spanning segment. At 192–340 (KKERQMAWRE…PNFTVENYAG (149 aa)) the chain is on the extracellular side. Residues Asn303 and Asn332 are each glycosylated (N-linked (GlcNAc...) asparagine). The helical transmembrane segment at 341 to 354 (WNCHTSKEDRDAFY) threads the bilayer. The Cytoplasmic portion of the chain corresponds to 355–452 (GLKSKADVYF…SKTVGCIASD (98 aa)). Residues 453 to 473 (VVLYVSLVFILSVVIIKFIIA) form a helical membrane-spanning segment. The Extracellular segment spans residues 474 to 891 (CYFRWTVARK…EYYISHHQAK (418 aa)). Ser537 carries the post-translational modification Phosphoserine. Position 538 is a phosphothreonine (Thr538). The helical transmembrane segment at 892–910 (AFESVFGSVTCLPGCFSMY) threads the bilayer. Over 911–1029 (RIKSPKGSDG…SMQFVIGIEL (119 aa)) the chain is Cytoplasmic. The chain crosses the membrane as a helical span at residues 1030–1050 (IGTMVLPLAICFTIYVIIFAI). Topologically, residues 1051 to 1055 (VSKPT) are extracellular. Residues 1056–1076 (PVITLVLLAIILGLPGLIVVI) traverse the membrane as a helical segment. Topologically, residues 1077 to 1165 (TATRWSYLWW…RKEESDSFVA (89 aa)) are cytoplasmic.

This sequence belongs to the chitin synthase family. Class IV subfamily. In terms of assembly, homodimer. May form higher order oligomers. Seems to interact with BNI4 and SKT5 which link CHS3 to septins. Glycosylated. In terms of processing, palmitoylated by PFA4; required for proper export from the ER.

The protein resides in the cell membrane. Its subcellular location is the bud neck. The protein localises to the cytoplasmic vesicle membrane. The enzyme catalyses [(1-&gt;4)-N-acetyl-beta-D-glucosaminyl](n) + UDP-N-acetyl-alpha-D-glucosamine = [(1-&gt;4)-N-acetyl-beta-D-glucosaminyl](n+1) + UDP + H(+). Polymerizes chitin, a structural polymer of the cell wall and septum, by transferring the sugar moiety of UDP-GlcNAc to the non-reducing end of the growing chitin polymer. Appears to be responsible for synthesis of the majority of the chitin found in the cell wall periphery. It is involved in the synthesis of the chitin ring that forms in the cell wall just before bud emergence. This ring remains at the base of the bud as the bud grows and ultimately forms part of the bud scar marking the division site on the mother cell. Also catalyzes the synthesis of chitin laid down during mating and spore cell-wall synthesis. This is Chitin synthase 3 from Saccharomyces cerevisiae (strain ATCC 204508 / S288c) (Baker's yeast).